The primary structure comprises 815 residues: G-type lectin S-receptor-like serine/threonine-protein kinase SD1-1 (815 aa).

The N-terminal stretch at 1–22 is a signal peptide; the sequence is MREIHSLFSLSLFLISSSLSVA. The Extracellular portion of the chain corresponds to 23-438; the sequence is LDYNVITPKE…FAKIEFKGRE (416 aa). The region spanning 25–152 is the Bulb-type lectin domain; sequence YNVITPKEFL…EEAVLWQSFD (128 aa). N-linked (GlcNAc...) asparagine glycosylation is found at asparagine 93, asparagine 249, and asparagine 265. Positions 288 to 326 constitute an EGF-like domain; that stretch reads PEDECDYYSICGAYAVCGINSKNTPSCSCLQGFKPKSGR. 2 disulfide bridges follow: cysteine 292-cysteine 304 and cysteine 298-cysteine 314. Residues asparagine 329 and asparagine 385 are each glycosylated (N-linked (GlcNAc...) asparagine). Residues 345–428 form the PAN domain; sequence CEKKDAFVKF…FGQDVYIRMG (84 aa). Intrachain disulfides connect cysteine 378–cysteine 403 and cysteine 382–cysteine 388. The helical transmembrane segment at 439–459 threads the bilayer; that stretch reads VVGMVVGSVVAIAVVLVVVFA. Residues 460–815 lie on the Cytoplasmic side of the membrane; sequence CFRKKIMKRY…EVSITMLQGR (356 aa). Residues 500-783 enclose the Protein kinase domain; that stretch reads FSYVNFLGRG…SDSSLPHPTQ (284 aa). Residues 506 to 514 and lysine 528 contribute to the ATP site; that span reads LGRGGFGPV. Phosphoserine is present on serine 534. The interval 589-606 is caM-binding; sequence RRSTELDWKKRMNIINGV. The active-site Proton acceptor is the aspartate 625. Serine 642 is modified (phosphoserine). At threonine 659 the chain carries Phosphothreonine. Phosphoserine is present on residues serine 797 and serine 803. Threonine 810 carries the phosphothreonine modification.

This sequence belongs to the protein kinase superfamily. Ser/Thr protein kinase family. As to quaternary structure, interacts with PUB9, PUB13 and PUB14.

The protein resides in the cell membrane. It catalyses the reaction L-seryl-[protein] + ATP = O-phospho-L-seryl-[protein] + ADP + H(+). The enzyme catalyses L-threonyl-[protein] + ATP = O-phospho-L-threonyl-[protein] + ADP + H(+). The chain is G-type lectin S-receptor-like serine/threonine-protein kinase SD1-1 (SD11) from Arabidopsis thaliana (Mouse-ear cress).